The following is a 603-amino-acid chain: NADH-ubiquinone oxidoreductase chain 5 (603 aa).

16 helical membrane-spanning segments follow: residues 4 to 24 (FTTM…ATLI), 38 to 58 (TAIA…ICLG), 89 to 109 (FLPV…WYMA), 122 to 142 (LIFL…QLFI), 171 to 191 (AILY…WFLL), 211 to 233 (LPLL…HPWL), 241 to 261 (TPVS…FLLI), 273 to 293 (IQTL…ICAL), 301 to 320 (IVAF…IGIN), 325 to 347 (AFLH…GSII), 366 to 386 (MPLT…MPFL), 405 to 424 (NAWA…AYST), 457 to 477 (LMTG…PTSL), 488 to 508 (LAAL…NYLA), 537 to 557 (IPHL…DLTW), and 582 to 602 (GMIK…LLMI).

Belongs to the complex I subunit 5 family. As to quaternary structure, core subunit of respiratory chain NADH dehydrogenase (Complex I) which is composed of 45 different subunits.

It localises to the mitochondrion inner membrane. It catalyses the reaction a ubiquinone + NADH + 5 H(+)(in) = a ubiquinol + NAD(+) + 4 H(+)(out). Its function is as follows. Core subunit of the mitochondrial membrane respiratory chain NADH dehydrogenase (Complex I) which catalyzes electron transfer from NADH through the respiratory chain, using ubiquinone as an electron acceptor. Essential for the catalytic activity and assembly of complex I. This is NADH-ubiquinone oxidoreductase chain 5 (MT-ND5) from Pongo pygmaeus (Bornean orangutan).